A 782-amino-acid polypeptide reads, in one-letter code: LPS-assembly protein LptD (782 aa).

The signal sequence occupies residues 1–23 (MNKKHTLISLAILTALYSQQSLA).

It belongs to the LptD family. As to quaternary structure, component of the lipopolysaccharide transport and assembly complex. Interacts with LptE and LptA.

Its subcellular location is the cell outer membrane. Together with LptE, is involved in the assembly of lipopolysaccharide (LPS) at the surface of the outer membrane. The polypeptide is LPS-assembly protein LptD (Haemophilus influenzae (strain 86-028NP)).